A 150-amino-acid polypeptide reads, in one-letter code: Large ribosomal subunit protein uL15 (150 aa).

The segment at 1-57 (MTLRLESLKPNKGARRRKLRKGRGIAAGQGASCGFGMRGQKSRSGRPTRPGFEGGQM) is disordered. A compositionally biased stretch (basic residues) spans 12–23 (KGARRRKLRKGR). Over residues 25–37 (IAAGQGASCGFGM) the composition is skewed to gly residues.

The protein belongs to the universal ribosomal protein uL15 family. As to quaternary structure, part of the 50S ribosomal subunit.

Its function is as follows. Binds to the 23S rRNA. In Synechococcus sp. (strain CC9311), this protein is Large ribosomal subunit protein uL15.